The following is a 139-amino-acid chain: MLIPRRVKHRKQHHPKRSGMSKGGTQVAFGEYGIQALTPAYVTNRQIESARIAMTRHIKRGGKVWINIYPDRPLTKKPAETRMGSGKGSPEWWIANVKPGRVMFELSYPNEKIAREALTRAAHKLPMKCRIVRREAGES.

Over residues 1–19 the composition is skewed to basic residues; the sequence is MLIPRRVKHRKQHHPKRSG. Residues 1-25 form a disordered region; sequence MLIPRRVKHRKQHHPKRSGMSKGGT.

It belongs to the universal ribosomal protein uL16 family. In terms of assembly, part of the 50S ribosomal subunit.

Binds 23S rRNA and is also seen to make contacts with the A and possibly P site tRNAs. The polypeptide is Large ribosomal subunit protein uL16 (Streptomyces griseus subsp. griseus (strain JCM 4626 / CBS 651.72 / NBRC 13350 / KCC S-0626 / ISP 5235)).